We begin with the raw amino-acid sequence, 275 residues long: Fos-related antigen 1 (275 aa).

Disordered stretches follow at residues 1-33 and 71-115; these read MYRD…QTVQ and TYPQ…VRRE. Over residues 7–33 the composition is skewed to low complexity; that stretch reads EPGPSSGAGSAYGRPAQPQQAQTQTVQ. Residues 107-170 enclose the bZIP domain; sequence EERRRVRRER…ERLELVLEAH (64 aa). Residues 109–129 are basic motif; the sequence is RRRVRRERNKLAAAKCRNRRK. A leucine-zipper region spans residues 135–163; it reads LQAETDKLEDEKSGLQREIEELQKQKERL. Residues 171-184 are compositionally biased toward basic and acidic residues; it reads RPICKIPEEDKKDT. Residues 171-275 form a disordered region; sequence RPICKIPEED…PLGSPTLLAL (105 aa). 3 stretches are compositionally biased toward low complexity: residues 185–194, 219–237, and 256–275; these read GGTSSTSGAG, LHTP…TPSL, and SSSS…LLAL. Serine 269 carries the phosphoserine modification.

The protein belongs to the bZIP family. Fos subfamily. Heterodimer. Interacts with the BAF multiprotein chromatin-remodeling complex subunits SMARCB1 and SMARCD1. Interacts with ARID1A and JUN.

The protein localises to the nucleus. This chain is Fos-related antigen 1 (Fosl1), found in Rattus norvegicus (Rat).